We begin with the raw amino-acid sequence, 189 residues long: Peptidyl-tRNA hydrolase (189 aa).

Tyrosine 15 provides a ligand contact to tRNA. Histidine 20 (proton acceptor) is an active-site residue. Phenylalanine 66, asparagine 68, and asparagine 114 together coordinate tRNA.

This sequence belongs to the PTH family. Monomer.

The protein resides in the cytoplasm. It catalyses the reaction an N-acyl-L-alpha-aminoacyl-tRNA + H2O = an N-acyl-L-amino acid + a tRNA + H(+). Functionally, hydrolyzes ribosome-free peptidyl-tRNAs (with 1 or more amino acids incorporated), which drop off the ribosome during protein synthesis, or as a result of ribosome stalling. Catalyzes the release of premature peptidyl moieties from peptidyl-tRNA molecules trapped in stalled 50S ribosomal subunits, and thus maintains levels of free tRNAs and 50S ribosomes. This Streptococcus pyogenes serotype M6 (strain ATCC BAA-946 / MGAS10394) protein is Peptidyl-tRNA hydrolase.